Consider the following 514-residue polypeptide: Glutathione-binding protein GsiB (514 aa).

The signal sequence occupies residues 1-27 (MSVMTIQRRWLVAAGVTAAMVASPVWA).

This sequence belongs to the bacterial solute-binding protein 5 family. The complex is composed of two ATP-binding proteins (GsiA), two transmembrane proteins (GsiC and GsiD) and a solute-binding protein (GsiB).

It is found in the periplasm. Functionally, part of the ABC transporter complex GsiABCD involved in glutathione import. Binds glutathione. The sequence is that of Glutathione-binding protein GsiB from Pectobacterium atrosepticum (strain SCRI 1043 / ATCC BAA-672) (Erwinia carotovora subsp. atroseptica).